The primary structure comprises 365 residues: 2'-hydroxybiphenyl-2-sulfinate desulfinase (365 aa).

Cys27 is an active-site residue. Positions 27, 60, and 70 each coordinate 2'-hydroxybiphenyl-2-sulfinate. Arg70 is an active-site residue.

The protein belongs to the DszB desulfinase family. As to quaternary structure, monomer.

It is found in the cytoplasm. The enzyme catalyses 2'-hydroxybiphenyl-2-sulfinate + H2O = biphenyl-2-ol + sulfite + H(+). It functions in the pathway sulfur metabolism; dibenzothiophene degradation. Its function is as follows. Catalyzes the third and final step of the '4S' desulfurization pathway that removes covalently bound sulfur from dibenzothiophene (DBT) without breaking carbon-carbon bonds. Oxidizes 2-(2'-hydroxyphenyl)benzene sulphinate (HBPS) to 2-hydroxybiphenyl (HBP) plus sulfite. The rate-limiting step of the '4S' desulfurization pathway. The chain is 2'-hydroxybiphenyl-2-sulfinate desulfinase from Rhodococcus erythropolis (Arthrobacter picolinophilus).